A 229-amino-acid chain; its full sequence is MIRAIVTDIEGTTSDIRFVHQVLFPYARERLATFLRLHAEDAEVAAPLTALRQELDQPQADIEQLIAALYRFMDEDRKSTALKALQGIIWRSGYQNGDFRGHLYPEVAGQLAAWQQQGLKLYVYSSGSVEAQKLLFGYSDAGDLQPLFSGYFDTHVGAKRETASYLNIAGKIGIAADELLFLSDIHQELDAARAAGWHTCQLIRDEADSQSQHPQVNRFDQIDLGEFAS.

Belongs to the HAD-like hydrolase superfamily. MasA/MtnC family. In terms of assembly, monomer. Mg(2+) is required as a cofactor.

It catalyses the reaction 5-methylsulfanyl-2,3-dioxopentyl phosphate + H2O = 1,2-dihydroxy-5-(methylsulfanyl)pent-1-en-3-one + phosphate. Its pathway is amino-acid biosynthesis; L-methionine biosynthesis via salvage pathway; L-methionine from S-methyl-5-thio-alpha-D-ribose 1-phosphate: step 3/6. It functions in the pathway amino-acid biosynthesis; L-methionine biosynthesis via salvage pathway; L-methionine from S-methyl-5-thio-alpha-D-ribose 1-phosphate: step 4/6. In terms of biological role, bifunctional enzyme that catalyzes the enolization of 2,3-diketo-5-methylthiopentyl-1-phosphate (DK-MTP-1-P) into the intermediate 2-hydroxy-3-keto-5-methylthiopentenyl-1-phosphate (HK-MTPenyl-1-P), which is then dephosphorylated to form the acireductone 1,2-dihydroxy-3-keto-5-methylthiopentene (DHK-MTPene). In Serratia proteamaculans (strain 568), this protein is Enolase-phosphatase E1.